A 110-amino-acid polypeptide reads, in one-letter code: U1-lycotoxin-Ls1hh (110 aa).

Residues 1–20 (MKFVLLFGVLLVTLFSYSSA) form the signal peptide. Positions 21 to 44 (EMLDDFDQADEDELLSLIEKEEAR) are excised as a propeptide. 4 cysteine pairs are disulfide-bonded: cysteine 47–cysteine 62, cysteine 54–cysteine 71, cysteine 61–cysteine 89, and cysteine 73–cysteine 87.

Belongs to the neurotoxin 19 (CSTX) family. 03 subfamily. Expressed by the venom gland.

The protein localises to the secreted. This Lycosa singoriensis (Wolf spider) protein is U1-lycotoxin-Ls1hh.